The primary structure comprises 778 residues: Endonuclease MutS2 (778 aa).

Position 328–335 (328–335 (GPNTGGKT)) interacts with ATP. One can recognise a Smr domain in the interval 702–777 (LDLRGKRYEE…GSGATIVTFK (76 aa)).

Belongs to the DNA mismatch repair MutS family. MutS2 subfamily. In terms of assembly, homodimer. Binds to stalled ribosomes, contacting rRNA.

Its function is as follows. Endonuclease that is involved in the suppression of homologous recombination and thus may have a key role in the control of bacterial genetic diversity. In terms of biological role, acts as a ribosome collision sensor, splitting the ribosome into its 2 subunits. Detects stalled/collided 70S ribosomes which it binds and splits by an ATP-hydrolysis driven conformational change. Acts upstream of the ribosome quality control system (RQC), a ribosome-associated complex that mediates the extraction of incompletely synthesized nascent chains from stalled ribosomes and their subsequent degradation. Probably generates substrates for RQC. The chain is Endonuclease MutS2 from Streptococcus pneumoniae (strain JJA).